A 389-amino-acid polypeptide reads, in one-letter code: Lipid-A-disaccharide synthase (389 aa).

Belongs to the LpxB family.

It catalyses the reaction a lipid X + a UDP-2-N,3-O-bis[(3R)-3-hydroxyacyl]-alpha-D-glucosamine = a lipid A disaccharide + UDP + H(+). Its pathway is bacterial outer membrane biogenesis; LPS lipid A biosynthesis. Its function is as follows. Condensation of UDP-2,3-diacylglucosamine and 2,3-diacylglucosamine-1-phosphate to form lipid A disaccharide, a precursor of lipid A, a phosphorylated glycolipid that anchors the lipopolysaccharide to the outer membrane of the cell. The chain is Lipid-A-disaccharide synthase from Paraburkholderia phytofirmans (strain DSM 17436 / LMG 22146 / PsJN) (Burkholderia phytofirmans).